A 299-amino-acid chain; its full sequence is MLDNTRLRIAIQKSGRLSDDSRELLARCGIKINLHTQRLIALAENMPIDILRVRDDDIPGLVMDGVVDLGIIGENVLEEELLTRRAQGEDPRYFTLRRLDFGGCRLSLAMAVDEAWDGPAALNGKRIATSYPHLLKRYLDQKGVQFKSCLLNGSVEVAPRAGLADAICDLVSTGATLEANGLREVEVIYRSKACLIQRDGEMPEAKQQLIDRLLTRIQGVIQARESKYIMMHAPTERLDEVIALLPGAERPTILPLAGDQQRVAMHMVSSETLFWETMEKLKALGASSILVLPIEKMME.

This sequence belongs to the ATP phosphoribosyltransferase family. Long subfamily. In terms of assembly, equilibrium between an active dimeric form, an inactive hexameric form and higher aggregates. Interconversion between the various forms is largely reversible and is influenced by the natural substrates and inhibitors of the enzyme. It depends on Mg(2+) as a cofactor.

It localises to the cytoplasm. It catalyses the reaction 1-(5-phospho-beta-D-ribosyl)-ATP + diphosphate = 5-phospho-alpha-D-ribose 1-diphosphate + ATP. Its pathway is amino-acid biosynthesis; L-histidine biosynthesis; L-histidine from 5-phospho-alpha-D-ribose 1-diphosphate: step 1/9. With respect to regulation, feedback inhibited by histidine. Its function is as follows. Catalyzes the condensation of ATP and 5-phosphoribose 1-diphosphate to form N'-(5'-phosphoribosyl)-ATP (PR-ATP). Has a crucial role in the pathway because the rate of histidine biosynthesis seems to be controlled primarily by regulation of HisG enzymatic activity. The sequence is that of ATP phosphoribosyltransferase from Enterobacter sp. (strain 638).